A 571-amino-acid chain; its full sequence is RUN and FYVE domain-containing protein 4 (571 aa).

In terms of domain architecture, RUN spans 33 to 166; sequence TDTSAELHRL…VAFELDLQQP (134 aa). The interval 174–207 is disordered; it reads MFSESRCSSSTQTQGRRPRKNKDAPKKIPAAYGG. Positions 178-188 are enriched in polar residues; the sequence is SRCSSSTQTQG. A coiled-coil region spans residues 408–481; that stretch reads EVSLQDEIKS…ERRDAMYQEE (74 aa). The FYVE-type zinc-finger motif lies at 474–567; that stretch reads RDAMYQEELG…CCPPCAQGRE (94 aa). 8 residues coordinate Zn(2+): Cys521, Cys524, Cys537, Cys540, Cys545, Cys548, Cys559, and Cys562.

Forms homodimers (via coiled coil domain). Interacts with RAB7A. Forms a ternary complex with RAB7A and LAMP2; the interaction with RAB7A is mediated by RUFY4 (via RUN and coiled coil domains). Interacts with GTP-, but not GDP-bound ARL8A and ARL8B. Interacts with dynactin/DCTN1 and the dynein intermediate chain DYNC1I1/2.

The protein resides in the cytoplasmic vesicle. It is found in the autophagosome. The protein localises to the lysosome. Functionally, ARL8 effector that promotes the coupling of endolysosomes to dynein-dynactin for retrograde transport along microtubules. Acts by binding both GTP-bound ARL8 and dynein-dynactin. In nonneuronal cells, promotes concentration of endolysosomes in the juxtanuclear area. In hippocampal neurons, drives retrograde transport of endolysosomes from the axon to the soma. Positive regulator of macroautophagy in dendritic cells. Increases autophagic flux, probably by stimulating both autophagosome formation and facilitating tethering with lysosomes. Binds to phosphatidylinositol 3-phosphate (PtdIns3P) through its FYVE-type zinc finger. Positive regulator of osteosclast bone-resorbing activity, possibly by promoting late endosome-lysosome fusion by acting as an adapter protein between RAB7A on late endosomes and LAMP2 on primary lysosomes. This is RUN and FYVE domain-containing protein 4 (RUFY4) from Homo sapiens (Human).